A 90-amino-acid chain; its full sequence is Serine-rich and transmembrane domain-containing 2 (90 aa).

The N-linked (GlcNAc...) asparagine glycan is linked to Asn-11. The chain crosses the membrane as a helical span at residues 38 to 58 (YVGLFLSLLAILLILLFTMLL). Residues 69–90 (SDSTESVPQFTDVEMQSRIPTP) are disordered.

The protein resides in the membrane. The polypeptide is Serine-rich and transmembrane domain-containing 2 (Homo sapiens (Human)).